The primary structure comprises 528 residues: Folylpolyglutamate synthase (528 aa).

104 to 107 (GKGG) serves as a coordination point for ATP. Positions 134, 208, and 236 each coordinate Mg(2+). Residues arginine 351 and aspartate 365 each coordinate ATP.

It belongs to the folylpolyglutamate synthase family. The cofactor is a monovalent cation.

It localises to the mitochondrion inner membrane. Its subcellular location is the mitochondrion matrix. It is found in the cytoplasm. It catalyses the reaction (6S)-5,6,7,8-tetrahydrofolyl-(gamma-L-Glu)(n) + L-glutamate + ATP = (6S)-5,6,7,8-tetrahydrofolyl-(gamma-L-Glu)(n+1) + ADP + phosphate + H(+). Its pathway is cofactor biosynthesis; tetrahydrofolylpolyglutamate biosynthesis. Catalyzes conversion of folates to polyglutamate derivatives allowing concentration of folate compounds in the cell and the intracellular retention of these cofactors, which are important substrates for most of the folate-dependent enzymes that are involved in one-carbon transfer reactions involved in purine, pyrimidine and amino acid synthesis. In Neurospora crassa (strain ATCC 24698 / 74-OR23-1A / CBS 708.71 / DSM 1257 / FGSC 987), this protein is Folylpolyglutamate synthase (met-6).